We begin with the raw amino-acid sequence, 679 residues long: DNA ligase (679 aa).

Residues 43–47 (DYVYD), 92–93 (SM), and glutamate 124 contribute to the NAD(+) site. The N6-AMP-lysine intermediate role is filled by lysine 126. The NAD(+) site is built by arginine 147, glutamate 181, lysine 297, and lysine 321. 4 residues coordinate Zn(2+): cysteine 415, cysteine 418, cysteine 433, and cysteine 438. A BRCT domain is found at 599-679 (TESAEWAGKR…RFDQAMKEEN (81 aa)).

The protein belongs to the NAD-dependent DNA ligase family. LigA subfamily. Mg(2+) serves as cofactor. Requires Mn(2+) as cofactor.

It carries out the reaction NAD(+) + (deoxyribonucleotide)n-3'-hydroxyl + 5'-phospho-(deoxyribonucleotide)m = (deoxyribonucleotide)n+m + AMP + beta-nicotinamide D-nucleotide.. Functionally, DNA ligase that catalyzes the formation of phosphodiester linkages between 5'-phosphoryl and 3'-hydroxyl groups in double-stranded DNA using NAD as a coenzyme and as the energy source for the reaction. It is essential for DNA replication and repair of damaged DNA. This chain is DNA ligase, found in Limosilactobacillus fermentum (strain NBRC 3956 / LMG 18251) (Lactobacillus fermentum).